The sequence spans 105 residues: Large ribosomal subunit protein uL24 (105 aa).

This sequence belongs to the universal ribosomal protein uL24 family. In terms of assembly, part of the 50S ribosomal subunit.

In terms of biological role, one of two assembly initiator proteins, it binds directly to the 5'-end of the 23S rRNA, where it nucleates assembly of the 50S subunit. Its function is as follows. One of the proteins that surrounds the polypeptide exit tunnel on the outside of the subunit. The sequence is that of Large ribosomal subunit protein uL24 from Chromohalobacter salexigens (strain ATCC BAA-138 / DSM 3043 / CIP 106854 / NCIMB 13768 / 1H11).